The following is a 240-amino-acid chain: Probable septum site-determining protein MinC (240 aa).

Belongs to the MinC family. In terms of assembly, interacts with MinD and FtsZ.

Cell division inhibitor that blocks the formation of polar Z ring septums. Rapidly oscillates between the poles of the cell to destabilize FtsZ filaments that have formed before they mature into polar Z rings. Prevents FtsZ polymerization. The protein is Probable septum site-determining protein MinC of Acinetobacter baumannii (strain ACICU).